The chain runs to 378 residues: DNA primase small subunit PriS (378 aa).

Active-site residues include Asp98, Asp100, and Asp282.

Belongs to the eukaryotic-type primase small subunit family. Heterodimer of a small subunit (PriS) and a large subunit (PriL). The cofactor is Mg(2+). It depends on Mn(2+) as a cofactor.

Functionally, catalytic subunit of DNA primase, an RNA polymerase that catalyzes the synthesis of short RNA molecules used as primers for DNA polymerase during DNA replication. The small subunit contains the primase catalytic core and has DNA synthesis activity on its own. Binding to the large subunit stabilizes and modulates the activity, increasing the rate of DNA synthesis while decreasing the length of the DNA fragments, and conferring RNA synthesis capability. The DNA polymerase activity may enable DNA primase to also catalyze primer extension after primer synthesis. May also play a role in DNA repair. The polypeptide is DNA primase small subunit PriS (Methanosphaerula palustris (strain ATCC BAA-1556 / DSM 19958 / E1-9c)).